Here is a 610-residue protein sequence, read N- to C-terminus: UvrABC system protein C (610 aa).

The 80-residue stretch at 12–91 folds into the GIY-YIG domain; that stretch reads TSPGVYLYKN…IKQKKPRFNI (80 aa). The UVR domain maps to 202–237; that stretch reads SDLKQSLTARMNKAAEGMQFELAAKYRDLITTVEDL.

It belongs to the UvrC family. As to quaternary structure, interacts with UvrB in an incision complex.

Its subcellular location is the cytoplasm. Functionally, the UvrABC repair system catalyzes the recognition and processing of DNA lesions. UvrC both incises the 5' and 3' sides of the lesion. The N-terminal half is responsible for the 3' incision and the C-terminal half is responsible for the 5' incision. The polypeptide is UvrABC system protein C (Koribacter versatilis (strain Ellin345)).